A 620-amino-acid polypeptide reads, in one-letter code: Probable potassium transport system protein Kup 1 (620 aa).

12 helical membrane passes run 10-30, 50-70, 102-122, 138-158, 168-188, 211-231, 246-266, 284-304, 336-356, 368-388, 393-413, and 415-435; these read LLISAIGVVYGDIGTSPLYAL, VLSLVFWTVMLLVTVKYVIVI, MLLGVIAAALFYGDSMITPAI, LTPYVVPITAVVLTGLFMIQK, FGPVMCLWFLVLALLGIVNIV, MMSFFALGSIVLAVTGGEALY, WFALVLPALLLNYFGQGALLL, MVVPMVGLATCATVIASQAVI, IYIPFTNWTLYIAVMALVIGF, IAVTGTMMIDTILVAFVMALM, WIAVAAVAGTLLLVDLAFFFA, and IIKVAQGGWFPLFIGVLSFTV.

Belongs to the HAK/KUP transporter (TC 2.A.72) family.

It localises to the cell inner membrane. It carries out the reaction K(+)(in) + H(+)(in) = K(+)(out) + H(+)(out). Transport of potassium into the cell. Likely operates as a K(+):H(+) symporter. This is Probable potassium transport system protein Kup 1 from Rhodopseudomonas palustris (strain BisB18).